A 700-amino-acid chain; its full sequence is Choline transporter-like protein 5-B (700 aa).

Residues 1–4 (GCTD) lie on the Cytoplasmic side of the membrane. A helical membrane pass occupies residues 5–25 (VLCCVIFVIVILGYIVLGTVA). Residues 26 to 209 (WMHGDPRKVV…KIFEDYASSW (184 aa)) are Extracellular-facing. Residues asparagine 157 and asparagine 164 are each glycosylated (N-linked (GlcNAc...) asparagine). Residues 210–230 (FWILIGLVISMLVSLVFILLL) form a helical membrane-spanning segment. Residues 231–233 (RFT) lie on the Cytoplasmic side of the membrane. The helical transmembrane segment at 234-254 (AGVLFWLVIFGVIAAVGYGIW) threads the bilayer. Topologically, residues 255-292 (HCYWEYSSLKGKPDSDVTISDIGFQTDFRVYLQLSQTW) are extracellular. Residues 293–313 (LIFMTSLAVIEAIIILVLIFL) traverse the membrane as a helical segment. Over 314 to 341 (RNRVRIAIALLKEGSKAIGCIMSTLFYP) the chain is Cytoplasmic. The chain crosses the membrane as a helical span at residues 342–362 (IITFLLLALCIAYWAVTAVFL). At 363–432 (ASSGEAVYKV…LQLCNLLVFL (70 aa)) the chain is on the extracellular side. N-linked (GlcNAc...) asparagine glycans are attached at residues asparagine 383 and asparagine 395. The chain crosses the membrane as a helical span at residues 433–455 (WLVNFTIALGQCTLAGAFAAYYW). The Cytoplasmic portion of the chain corresponds to 456 to 482 (ALRKPADIPPCPLASSFGRALRYHTGS). A helical transmembrane segment spans residues 483 to 503 (LAFGALILSIVQFIRIILEYL). Over 504-541 (DHKLKGAHNAFTRFLLCCLKCCFWCLEHFIKFMNRNAY) the chain is Extracellular. The chain crosses the membrane as a helical span at residues 542–562 (IMISIYGKNFCTSARDAFFLL). The Cytoplasmic segment spans residues 563–577 (MRNVMRVAVLDKVTD). Residues 578–598 (FLLFLGKLLISGSVGVLAFFF) traverse the membrane as a helical segment. At 599–616 (FTRQIPVIQEEVPSLNYY) the chain is on the extracellular side. Residues 617 to 637 (WVPLLTVIFGSYMIAHGFFNV) form a helical membrane-spanning segment. The Cytoplasmic portion of the chain corresponds to 638 to 687 (YAMCVDTLFLCFLLDLEKNDGSATRPYYMCSSLRAILNKKNQKRPKETKR). Positions 676–700 (KKNQKRPKETKRGRKQKKEQPKSRH) are disordered. Basic residues predominate over residues 677-692 (KNQKRPKETKRGRKQK).

The protein belongs to the CTL (choline transporter-like) family.

The protein localises to the cell membrane. It catalyses the reaction choline(out) + n H(+)(in) = choline(in) + n H(+)(out). Choline/H+ antiporter. The polypeptide is Choline transporter-like protein 5-B (slc44a5b) (Danio rerio (Zebrafish)).